The chain runs to 367 residues: 3-isopropylmalate dehydrogenase (367 aa).

77–90 lines the NAD(+) pocket; sequence GPKWDAVPYEVRPE. Residues R97, R107, R135, and D226 each coordinate substrate. Positions 226, 250, and 254 each coordinate Mg(2+). An NAD(+)-binding site is contributed by 290–302; the sequence is GSAPDIAGKGIAN.

It belongs to the isocitrate and isopropylmalate dehydrogenases family. LeuB type 1 subfamily. Homodimer. It depends on Mg(2+) as a cofactor. Mn(2+) serves as cofactor.

The protein localises to the cytoplasm. The catalysed reaction is (2R,3S)-3-isopropylmalate + NAD(+) = 4-methyl-2-oxopentanoate + CO2 + NADH. It participates in amino-acid biosynthesis; L-leucine biosynthesis; L-leucine from 3-methyl-2-oxobutanoate: step 3/4. In terms of biological role, catalyzes the oxidation of 3-carboxy-2-hydroxy-4-methylpentanoate (3-isopropylmalate) to 3-carboxy-4-methyl-2-oxopentanoate. The product decarboxylates to 4-methyl-2 oxopentanoate. In Mesorhizobium japonicum (strain LMG 29417 / CECT 9101 / MAFF 303099) (Mesorhizobium loti (strain MAFF 303099)), this protein is 3-isopropylmalate dehydrogenase.